A 104-amino-acid chain; its full sequence is UPF0213 protein in VLF1-GP41 intergenic region (104 aa).

In terms of domain architecture, GIY-YIG spans 9–89; that stretch reads KVWCVYILRQ…SKYFKLRLIK (81 aa).

The protein belongs to the UPF0213 family.

This is UPF0213 protein in VLF1-GP41 intergenic region from Autographa californica nuclear polyhedrosis virus (AcMNPV).